We begin with the raw amino-acid sequence, 262 residues long: Shikimate dehydrogenase (NADP(+)) (262 aa).

Shikimate is bound by residues 14-16 (SAS) and Thr-60. The active-site Proton acceptor is Lys-64. Shikimate-binding residues include Asn-85 and Asp-100. Residues 121-125 (GAGGA), 145-150 (NRTAER), and Phe-203 each bind NADP(+). Position 205 (Tyr-205) interacts with shikimate. Gly-227 provides a ligand contact to NADP(+).

The protein belongs to the shikimate dehydrogenase family. Homodimer.

It catalyses the reaction shikimate + NADP(+) = 3-dehydroshikimate + NADPH + H(+). Its pathway is metabolic intermediate biosynthesis; chorismate biosynthesis; chorismate from D-erythrose 4-phosphate and phosphoenolpyruvate: step 4/7. Functionally, involved in the biosynthesis of the chorismate, which leads to the biosynthesis of aromatic amino acids. Catalyzes the reversible NADPH linked reduction of 3-dehydroshikimate (DHSA) to yield shikimate (SA). This is Shikimate dehydrogenase (NADP(+)) from Pyrobaculum aerophilum (strain ATCC 51768 / DSM 7523 / JCM 9630 / CIP 104966 / NBRC 100827 / IM2).